Here is a 521-residue protein sequence, read N- to C-terminus: Cholesterol side-chain cleavage enzyme, mitochondrial (521 aa).

The transit peptide at 1-39 (MLAKGLPPRSVLVKGCQTFLSAPREGLGRLRVPTGEGAG) directs the protein to the mitochondrion. C462 is a binding site for heme.

The protein belongs to the cytochrome P450 family. In terms of assembly, interacts with FDX1/adrenodoxin. The cofactor is heme.

It localises to the mitochondrion inner membrane. The enzyme catalyses 6 reduced [adrenodoxin] + cholesterol + 3 O2 + 6 H(+) = 4-methylpentanal + pregnenolone + 6 oxidized [adrenodoxin] + 4 H2O. It carries out the reaction 2 reduced [adrenodoxin] + cholesterol + O2 + 2 H(+) = (22R)-hydroxycholesterol + 2 oxidized [adrenodoxin] + H2O. It catalyses the reaction (22R)-hydroxycholesterol + 2 reduced [adrenodoxin] + O2 + 2 H(+) = (20R,22R)-20,22-dihydroxycholesterol + 2 oxidized [adrenodoxin] + H2O. The catalysed reaction is (20R,22R)-20,22-dihydroxycholesterol + 2 reduced [adrenodoxin] + O2 + 2 H(+) = 4-methylpentanal + pregnenolone + 2 oxidized [adrenodoxin] + 2 H2O. It functions in the pathway lipid metabolism; C21-steroid hormone metabolism. The protein operates within steroid metabolism; cholesterol metabolism. Its function is as follows. A cytochrome P450 monooxygenase that catalyzes the side-chain hydroxylation and cleavage of cholesterol to pregnenolone, the precursor of most steroid hormones. Catalyzes three sequential oxidation reactions of cholesterol, namely the hydroxylation at C22 followed with the hydroxylation at C20 to yield 20R,22R-hydroxycholesterol that is further cleaved between C20 and C22 to yield the C21-steroid pregnenolone and 4-methylpentanal. Mechanistically, uses molecular oxygen inserting one oxygen atom into a substrate and reducing the second into a water molecule. Two electrons are provided by NADPH via a two-protein mitochondrial transfer system comprising flavoprotein FDXR (adrenodoxin/ferredoxin reductase) and nonheme iron-sulfur protein FDX1 or FDX2 (adrenodoxin/ferredoxin). This is Cholesterol side-chain cleavage enzyme, mitochondrial from Homo sapiens (Human).